The chain runs to 938 residues: Myocardin (938 aa).

The short motif at 12-27 is the MEF2C-binding element; sequence IRSKFRSVLQLRLQQR. One copy of the RPEL 1 repeat lies at 18–43; that stretch reads SVLQLRLQQRRTQEQLANQGIIPPLK. A compositionally biased stretch (basic and acidic residues) spans 48–61; that stretch reads FHEQRKHLDSDKAK. The segment at 48 to 68 is disordered; that stretch reads FHEQRKHLDSDKAKNSLKRKA. 2 RPEL repeats span residues 62–87 and 106–131; these read NSLKRKARNRCNSADLVNMHILQAST and DDLNEKIALRPGPLELVEKNILPVDS. The segment at 153-205 is HDAC5-binding; that stretch reads FEEDSSSDGLSPDQTRSEDPQNSAGSPPDAKASDTPSTGSLGTNQDLASGSEN. Residues 154–281 form a disordered region; sequence EEDSSSDGLS…DQKAEKSPPP (128 aa). Composition is skewed to polar residues over residues 159 to 177, 186 to 203, and 210 to 220; these read SDGLSPDQTRSEDPQNSAG, DTPSTGSLGTNQDLASGS, and SASQPSHQSDA. Residues 248-265 show a composition bias toward basic residues; sequence NRHKKPKDPKPKVKKLKY. The region spanning 371-405 is the SAP domain; it reads LDDLKVSELRQQLRIRGLPVSGTKTALMDRLRPFQ. Residues serine 451, serine 455, serine 459, and serine 463 each carry the phosphoserine; by GSK3-beta modification. Residues 516-561 are a coiled coil; it reads EKDKMLVEKQKVINELTWKLQQEQRQVEELRMQLQKQKRNNCSEKK. Serine 626, serine 630, serine 634, and serine 638 each carry phosphoserine; by GSK3-beta. Disordered regions lie at residues 635–678 and 693–734; these read PQHS…SSPI and SDKV…MTRS. The segment covering 699 to 715 has biased composition (low complexity); that stretch reads KFSIPSPTFSKSSSAIS. Positions 717–938 are required for interaction with and ubiquitination by STUB1; that stretch reads VTQPPSYEDA…SSMDLHLQQW (222 aa). Serine 815, serine 862, and serine 869 each carry phosphoserine; by MAPK1 and MAPK3. A Phosphothreonine; by MAPK1 and MAPK3 modification is found at threonine 896.

In terms of assembly, homodimer. Interacts with SRF, its association does not depend on specific DNA sequences for ternary complex formation. Interacts with MLLT7/FOXO4. Interacts (via C-terminal) with EP300 (via the CREB-binding domain). Interacts with HDAC4 and HDAC5. Interacts with MEF2C. Interacts (via C-terminus) with STUB1/CHIP. Interacts with PURB. Ubiquitinated; by STUB1/CHIP at the C-terminus, leading to its degradation by the proteasome. Phosphorylation by GSK3B is required for STUB1/CHIP-mediated ubiquitination. In terms of processing, phosphorylation negatively regulates the intrinsic myocardin transcriptional activity. Phosphorylated; by GSK3B. Expressed in the heart, aorta and bladder. Expressed in smooth muscle cell-containing tissues: stomach, small intestine, colon, lung, placenta and uterus. Very faint expression in prostate and skeletal muscle.

The protein localises to the nucleus. Smooth muscle cells (SM) and cardiac muscle cells-specific transcriptional factor which uses the canonical single or multiple CArG boxes DNA sequence. Acts as a cofactor of serum response factor (SRF) with the potential to modulate SRF-target genes. Plays a crucial role in cardiogenesis, urinary bladder development, and differentiation of the smooth muscle cell lineage (myogenesis). Positively regulates the transcription of genes involved in vascular smooth muscle contraction. In Homo sapiens (Human), this protein is Myocardin (MYOCD).